An 851-amino-acid chain; its full sequence is DNA mismatch repair protein MutS (851 aa).

An ATP-binding site is contributed by 602–609; the sequence is GPNMSGKS.

It belongs to the DNA mismatch repair MutS family.

This protein is involved in the repair of mismatches in DNA. It is possible that it carries out the mismatch recognition step. This protein has a weak ATPase activity. The sequence is that of DNA mismatch repair protein MutS from Streptococcus pyogenes serotype M18 (strain MGAS8232).